The following is a 288-amino-acid chain: 4-hydroxybenzoate octaprenyltransferase (288 aa).

8 consecutive transmembrane segments (helical) span residues 23–43 (IGSL…GRGI), 46–66 (AKIL…GCVV), 98–118 (ILFV…NSMT), 141–161 (LPQV…FAAV), 163–183 (ESLP…TVAY), 213–233 (LIIG…GWLM), 234–254 (NLGG…THQQ), and 268–288 (AFLN…ISYW).

This sequence belongs to the UbiA prenyltransferase family. The cofactor is Mg(2+).

It localises to the cell inner membrane. It catalyses the reaction all-trans-octaprenyl diphosphate + 4-hydroxybenzoate = 4-hydroxy-3-(all-trans-octaprenyl)benzoate + diphosphate. It participates in cofactor biosynthesis; ubiquinone biosynthesis. Its function is as follows. Catalyzes the prenylation of para-hydroxybenzoate (PHB) with an all-trans polyprenyl group. Mediates the second step in the final reaction sequence of ubiquinone-8 (UQ-8) biosynthesis, which is the condensation of the polyisoprenoid side chain with PHB, generating the first membrane-bound Q intermediate 3-octaprenyl-4-hydroxybenzoate. The sequence is that of 4-hydroxybenzoate octaprenyltransferase from Yersinia pseudotuberculosis serotype IB (strain PB1/+).